We begin with the raw amino-acid sequence, 324 residues long: Glyoxylate/hydroxypyruvate reductase B (324 aa).

Catalysis depends on residues Arg237 and Glu266. Catalysis depends on His285, which acts as the Proton donor.

It belongs to the D-isomer specific 2-hydroxyacid dehydrogenase family. GhrB subfamily. In terms of assembly, homodimer.

The protein localises to the cytoplasm. The catalysed reaction is glycolate + NADP(+) = glyoxylate + NADPH + H(+). It carries out the reaction (R)-glycerate + NAD(+) = 3-hydroxypyruvate + NADH + H(+). The enzyme catalyses (R)-glycerate + NADP(+) = 3-hydroxypyruvate + NADPH + H(+). Catalyzes the NADPH-dependent reduction of glyoxylate and hydroxypyruvate into glycolate and glycerate, respectively. This is Glyoxylate/hydroxypyruvate reductase B from Salmonella typhi.